Reading from the N-terminus, the 544-residue chain is Chaperonin GroEL (544 aa).

ATP contacts are provided by residues 29–32, 86–90, glycine 413, 476–478, and aspartate 492; these read TLGP, DGTTT, and NAA.

This sequence belongs to the chaperonin (HSP60) family. In terms of assembly, forms a cylinder of 14 subunits composed of two heptameric rings stacked back-to-back. Interacts with the co-chaperonin GroES.

It localises to the cytoplasm. The enzyme catalyses ATP + H2O + a folded polypeptide = ADP + phosphate + an unfolded polypeptide.. Functionally, together with its co-chaperonin GroES, plays an essential role in assisting protein folding. The GroEL-GroES system forms a nano-cage that allows encapsulation of the non-native substrate proteins and provides a physical environment optimized to promote and accelerate protein folding. The polypeptide is Chaperonin GroEL (Bacillus thuringiensis (strain Al Hakam)).